We begin with the raw amino-acid sequence, 338 residues long: Protein WVD2-like 2 (338 aa).

Residues 1-14 (MGRELVDKHMDKKA) show a composition bias toward basic and acidic residues. Residues 1–150 (MGRELVDKHM…SFSVASSSAT (150 aa)) form a disordered region. 2 stretches are compositionally biased toward polar residues: residues 15–37 (NSLTASSTGSSDDNKVPSPSTNE) and 59–69 (QGITETPGSHK). The segment covering 100–115 (NNSLGNGASHNSSSAS) has biased composition (low complexity). The segment covering 128–138 (RIPDHKMHHDE) has biased composition (basic and acidic residues). Positions 177 to 214 (REFYQKLEEKQKALEAEKRENEKRLKEEQEAVTKQLRK) form a coiled coil. The tract at residues 222 to 338 (PVPSFYQEGP…GENGVGVVEE (117 aa)) is disordered. Residues 288–300 (TNSVPRTPNSSSK) show a composition bias toward polar residues.

It belongs to the TPX2 family. Expressed in seedlings.

It localises to the cytoplasm. The protein localises to the cytoskeleton. Microtubule-associated protein (MAP) that regulates the orientation of interphase cortical microtubules. In Arabidopsis thaliana (Mouse-ear cress), this protein is Protein WVD2-like 2.